We begin with the raw amino-acid sequence, 191 residues long: Shikimate kinase (191 aa).

Residue 24–29 coordinates ATP; it reads GSGKTS. Threonine 28 provides a ligand contact to Mg(2+). Substrate contacts are provided by aspartate 46, arginine 70, and glycine 92. Position 130 (arginine 130) interacts with ATP. Residue arginine 149 coordinates substrate.

The protein belongs to the shikimate kinase family. In terms of assembly, monomer. It depends on Mg(2+) as a cofactor.

It localises to the cytoplasm. The enzyme catalyses shikimate + ATP = 3-phosphoshikimate + ADP + H(+). The protein operates within metabolic intermediate biosynthesis; chorismate biosynthesis; chorismate from D-erythrose 4-phosphate and phosphoenolpyruvate: step 5/7. Functionally, catalyzes the specific phosphorylation of the 3-hydroxyl group of shikimic acid using ATP as a cosubstrate. The chain is Shikimate kinase from Parasynechococcus marenigrum (strain WH8102).